A 352-amino-acid chain; its full sequence is MSKQPSLSYKDAGVDIDAGEALVERIKSVAKRTARPEVMGGLGGFGALCEIPAGYKQPVLVSGTDGVGTKLRLALNLNKHDSIGQDLVAMCVNDLVVCGAEPLFFLDYYATGKLNVDVAATVVTGIGAGCELAGCSLVGGETAEMPGMYEGEDYDLAGFCVGVVEKAEIIDGSKVATGDALIALPSSGPHSNGYSLIRKIIEVSGADIETVQLDGKPLTELLMAPTRIYVKPLLKLIKDTGAVKAMAHITGGGLLDNIPRVLPKGAQAVVDVASWNRPAVFDWLQEKGNVDETEMHRVLNCGVGMVICVAQEHVEVALNTLRDAGEQPWVIGQIAAAAEGAAQVELKNLKAH.

Belongs to the AIR synthase family.

Its subcellular location is the cytoplasm. It catalyses the reaction 2-formamido-N(1)-(5-O-phospho-beta-D-ribosyl)acetamidine + ATP = 5-amino-1-(5-phospho-beta-D-ribosyl)imidazole + ADP + phosphate + H(+). It participates in purine metabolism; IMP biosynthesis via de novo pathway; 5-amino-1-(5-phospho-D-ribosyl)imidazole from N(2)-formyl-N(1)-(5-phospho-D-ribosyl)glycinamide: step 2/2. The sequence is that of Phosphoribosylformylglycinamidine cyclo-ligase from Pseudomonas fluorescens (strain Pf0-1).